A 548-amino-acid chain; its full sequence is Thermosome subunit alpha (548 aa).

The interval 527–548 (TKPEGGQGGGMPGGMGGMDMGM) is disordered. Over residues 531-548 (GGQGGGMPGGMGGMDMGM) the composition is skewed to gly residues.

Belongs to the TCP-1 chaperonin family. As to quaternary structure, forms a Heterooligomeric complex of two stacked eight-membered rings.

Its function is as follows. Molecular chaperone; binds unfolded polypeptides in vitro, and has a weak ATPase activity. In Thermococcus sp. (strain JCM 11816 / KS-1), this protein is Thermosome subunit alpha (thsA).